The following is a 904-amino-acid chain: Patched domain-containing protein 4 (904 aa).

Residues 41–61 (HPVFFLTVPAVLTITFGLSAL) traverse the membrane as a helical segment. Residue N149 is glycosylated (N-linked (GlcNAc...) asparagine). One can recognise an SSD domain in the interval 291 to 450 (TRSKVLVSLV…FSFFGSCLVF (160 aa)). 6 helical membrane passes run 295–312 (VLVSLVLILTTATLSSSM), 323–343 (GLLGVLTVCISIATAAGIFFI), 351–371 (TLLGIPFFAMGHGTKGVFELL), 394–414 (VMVTYTMTSSLYFITFGMGAS), 431–451 (VSILLNYFYIFSFFGSCLVFA), and 523–543 (PFVVILYLIYASFSFMGCLQI). A glycan (N-linked (GlcNAc...) asparagine) is linked at N625. 3 helical membrane passes run 718 to 738 (PVLIAGFGVLLVLILTFFLVI), 744 to 764 (FWLILSVTSIELGVLGLMTLW), and 771 to 791 (ISILCLIYTLNFAIDHCAPLL). An N-linked (GlcNAc...) asparagine glycan is attached at N820. A run of 2 helical transmembrane segments spans residues 823 to 843 (SFLIGLLPLLFVPSNLTFTLF) and 845 to 865 (CLLLTGGCTLLHCFVILPVFL).

This sequence belongs to the patched family.

Its subcellular location is the membrane. In terms of biological role, could act as a repressor of canonical hedgehog signaling by antagonizing the effects of SMO, as suggested by down-regulation of hedgehog target genes, including GLI1, PTCH1, and PTCH2 in PTCHD4-expressing cells. This Mus musculus (Mouse) protein is Patched domain-containing protein 4 (Ptchd4).